Consider the following 120-residue polypeptide: Large ribosomal subunit protein bL17 (120 aa).

It belongs to the bacterial ribosomal protein bL17 family. As to quaternary structure, part of the 50S ribosomal subunit. Contacts protein L32.

In Bacillus licheniformis (strain ATCC 14580 / DSM 13 / JCM 2505 / CCUG 7422 / NBRC 12200 / NCIMB 9375 / NCTC 10341 / NRRL NRS-1264 / Gibson 46), this protein is Large ribosomal subunit protein bL17.